Here is a 575-residue protein sequence, read N- to C-terminus: Flagellin B (575 aa).

It belongs to the bacterial flagellin family. Heteromer of flaA and flaB.

It is found in the secreted. Its subcellular location is the bacterial flagellum. Functionally, flagellin is the subunit protein which polymerizes to form the filaments of bacterial flagella. The sequence is that of Flagellin B (flaB) from Campylobacter jejuni.